Reading from the N-terminus, the 150-residue chain is UPF0756 membrane protein PC1_1142 (150 aa).

4 helical membrane passes run 1 to 21, 51 to 71, 82 to 102, and 127 to 147; these read MAYLDPTLLILLVLAGLGIIS, YGLSIGIVILTIGVMAPIASG, FLHWKSLLAILIGVAVSWLGG, and ALFRGVPVGPLIAAGLLSLLI.

The protein belongs to the UPF0756 family.

It localises to the cell membrane. The chain is UPF0756 membrane protein PC1_1142 from Pectobacterium carotovorum subsp. carotovorum (strain PC1).